A 498-amino-acid polypeptide reads, in one-letter code: MEAAADLRDTALLTLKFKFNPRLGIDNPVLSLAEDQDQSDPWNLHRPRFCLLSKEEEKTFGFHLQQHLGKADHVVCRVDPGTSAQRQGLREGDRILAVNNNIVAHEDHAVVVRYIRASGPRVLLTVLAQHVHDVARVLQGSDAFLCPTLPSGVRPRLCHVVKDEGGFGFSVTHGSRGPFWLVLSAGGAAERAGVPPGARLLEVNGASVEKLTYNQLNRKLWQSGDQVTLLVAGLEVEEQCHQLGMPLAAPLAEGWALPAKPRCLNIEKGPEGFGFLLREEKGLDGRLGQFLWDVDPGLPADKAGMKAGDRLVAVAGESVDGLGHEETVSRIRAQGSCVSLIVVDPEADRFFSMVRLSPLLFLENTEIAAPPLAETKDLPVEDTVEPSGLAGSCQCFLYPGPGGGYGFRLCCVASGPCLFISQVTPGGSTARAGLQVGDTVLEVNGYPVGGDSELDRLQQLTEAEPPLCLKLGARNPQGLEAWISLESGEDWTLASELL.

PDZ domains lie at 49–130 (FCLL…LAQH), 157–235 (LCHV…AGLE), 263–346 (CLNI…VDPE), and 394–475 (QCFL…GARN). Residue serine 329 is modified to Phosphoserine.

As to quaternary structure, interacts with the C-terminal region of GUCY2C. Interacts with C-terminal region of SLC9A3 and the interactions decrease in response to elevated calcium ion levels. Interacts with the C-terminal region of SLC34A1. Interacts with USP2 isoform 2. Interacts (via the third PDZ domain) with SLC26A3 (via PDZ-binding motif). This interaction leads to decreased expression of SLC26A3 on the cell membrane resulting in its reduced exchanger activity. Post-translationally, phosphorylation at Ser-329 negatively regulates its interaction with SLC26A3. In terms of tissue distribution, expressed in kidney and small intestine. Not detected in heart, brain, spleen, lung, liver, skeletal muscle or testis.

The protein resides in the cell membrane. The protein localises to the cytoplasm. Functionally, acts as a regulatory protein that associates with GUCY2C and negatively modulates its heat-stable enterotoxin-mediated activation. Stimulates SLC9A3 activity in the presence of elevated calcium ions. This is Na(+)/H(+) exchange regulatory cofactor NHE-RF4 (Nherf4) from Mus musculus (Mouse).